A 493-amino-acid polypeptide reads, in one-letter code: GTPase Der (493 aa).

2 EngA-type G domains span residues 3–166 (PVVA…SGKG) and 207–380 (LKLA…DCAT). GTP is bound by residues 9-16 (GRPNVGKS), 56-60 (DTGGI), 118-121 (NKTD), 213-220 (GKPNVGKS), 260-264 (DTAGV), and 325-328 (NKWD). Residues 381 to 465 (RRVNTSLLTR…PIRIQFKEGA (85 aa)) enclose the KH-like domain.

Belongs to the TRAFAC class TrmE-Era-EngA-EngB-Septin-like GTPase superfamily. EngA (Der) GTPase family. As to quaternary structure, associates with the 50S ribosomal subunit.

Its function is as follows. GTPase that plays an essential role in the late steps of ribosome biogenesis. This is GTPase Der from Photorhabdus laumondii subsp. laumondii (strain DSM 15139 / CIP 105565 / TT01) (Photorhabdus luminescens subsp. laumondii).